The following is a 533-amino-acid chain: uncharacterized protein (533 aa).

A run of 5 helical transmembrane segments spans residues 4-23 (FLAA…GLAI), 28-47 (VFGL…VVST), 57-79 (IVYQ…PAFF), 86-108 (GWKL…WVLI), and 151-173 (VIGY…AVGA). An RCK C-terminal domain is found at 263–347 (LGEERETKIE…VAEVRRFLGD (85 aa)). 4 consecutive transmembrane segments (helical) span residues 352–374 (LADV…GAIP), 379–401 (GGTT…LGAL), 422–444 (LGLA…AALT), and 454–476 (GGLV…VLRL).

This sequence belongs to the AAE transporter (TC 2.A.81) family.

The protein resides in the cell membrane. This is an uncharacterized protein from Corynebacterium glutamicum (strain ATCC 13032 / DSM 20300 / JCM 1318 / BCRC 11384 / CCUG 27702 / LMG 3730 / NBRC 12168 / NCIMB 10025 / NRRL B-2784 / 534).